We begin with the raw amino-acid sequence, 634 residues long: Probable potassium transport system protein Kup (634 aa).

The next 12 helical transmembrane spans lie at 19–39 (AIGL…TSPL), 62–82 (VLSL…VIFV), 113–133 (FVVV…MITP), 150–170 (GLEH…FLIQ), 177–197 (IGIL…ALGV), 225–245 (IGVA…ALYA), 259–279 (WFLL…ATIL), 291–311 (LLAP…ATVI), 349–369 (IYIG…VLGF), 379–399 (YGVA…VVIW), 406–426 (LWLG…FFAA), and 431–451 (VIQG…LMST).

The protein belongs to the HAK/KUP transporter (TC 2.A.72) family.

It is found in the cell inner membrane. It catalyses the reaction K(+)(in) + H(+)(in) = K(+)(out) + H(+)(out). Functionally, transport of potassium into the cell. Likely operates as a K(+):H(+) symporter. This is Probable potassium transport system protein Kup from Pseudomonas aeruginosa (strain LESB58).